The following is a 375-amino-acid chain: Dual-specificity RNA methyltransferase RlmN (375 aa).

Catalysis depends on E94, which acts as the Proton acceptor. The region spanning 100-339 (EDDRATLCVS…VTVRKTRGDD (240 aa)) is the Radical SAM core domain. Cysteines 107 and 344 form a disulfide. [4Fe-4S] cluster is bound by residues C114, C118, and C121. Residues 168–169 (GE), S200, 222–224 (SLH), and N301 each bind S-adenosyl-L-methionine. Residue C344 is the S-methylcysteine intermediate of the active site.

This sequence belongs to the radical SAM superfamily. RlmN family. [4Fe-4S] cluster serves as cofactor.

Its subcellular location is the cytoplasm. The enzyme catalyses adenosine(2503) in 23S rRNA + 2 reduced [2Fe-2S]-[ferredoxin] + 2 S-adenosyl-L-methionine = 2-methyladenosine(2503) in 23S rRNA + 5'-deoxyadenosine + L-methionine + 2 oxidized [2Fe-2S]-[ferredoxin] + S-adenosyl-L-homocysteine. It carries out the reaction adenosine(37) in tRNA + 2 reduced [2Fe-2S]-[ferredoxin] + 2 S-adenosyl-L-methionine = 2-methyladenosine(37) in tRNA + 5'-deoxyadenosine + L-methionine + 2 oxidized [2Fe-2S]-[ferredoxin] + S-adenosyl-L-homocysteine. Functionally, specifically methylates position 2 of adenine 2503 in 23S rRNA and position 2 of adenine 37 in tRNAs. m2A2503 modification seems to play a crucial role in the proofreading step occurring at the peptidyl transferase center and thus would serve to optimize ribosomal fidelity. This is Dual-specificity RNA methyltransferase RlmN from Vibrio campbellii (strain ATCC BAA-1116).